Here is a 345-residue protein sequence, read N- to C-terminus: Phosphoribosylformylglycinamidine cyclo-ligase (345 aa).

The protein belongs to the AIR synthase family.

The protein localises to the cytoplasm. The catalysed reaction is 2-formamido-N(1)-(5-O-phospho-beta-D-ribosyl)acetamidine + ATP = 5-amino-1-(5-phospho-beta-D-ribosyl)imidazole + ADP + phosphate + H(+). Its pathway is purine metabolism; IMP biosynthesis via de novo pathway; 5-amino-1-(5-phospho-D-ribosyl)imidazole from N(2)-formyl-N(1)-(5-phospho-D-ribosyl)glycinamide: step 2/2. In Synechococcus sp. (strain CC9605), this protein is Phosphoribosylformylglycinamidine cyclo-ligase.